We begin with the raw amino-acid sequence, 342 residues long: S-adenosylmethionine:tRNA ribosyltransferase-isomerase (342 aa).

The protein belongs to the QueA family. As to quaternary structure, monomer.

It is found in the cytoplasm. The enzyme catalyses 7-aminomethyl-7-carbaguanosine(34) in tRNA + S-adenosyl-L-methionine = epoxyqueuosine(34) in tRNA + adenine + L-methionine + 2 H(+). It functions in the pathway tRNA modification; tRNA-queuosine biosynthesis. In terms of biological role, transfers and isomerizes the ribose moiety from AdoMet to the 7-aminomethyl group of 7-deazaguanine (preQ1-tRNA) to give epoxyqueuosine (oQ-tRNA). The polypeptide is S-adenosylmethionine:tRNA ribosyltransferase-isomerase (Geobacillus kaustophilus (strain HTA426)).